Reading from the N-terminus, the 536-residue chain is MACSWTFLWLLWIAMVAVLLFFLRGPLKISESLESVSATSYFNNLTPKFYVALTGTSSLVSGIILIFEWWYFKNNAGVEQGEDEGSDNEESIDNPKTVPECKVWRNPMALFRAAEYNRFRKETNSEPLTYYDMNLSAQDHQSLFMCDEDQGRAEYEIMQVAWRERESEQRIQTARTALAINSECASALVLLAEEDTETVAQAENVLRRALRAIENTLSTYSNNQIASYGQNGDTVRKRDLTIQTYIKRRLAMCARKQGRLREAIKGFRDLSREQSLSTLLSVQDNLIEACLEVQAYADVQNLLVRYDGYGTSCSYDQREPRSAAMSYTSALLKVRAVAENFRCPSESSVRRGLSSAEQTAIEALTRAMEFNPHVPPYLLEIRAMIMPPEHFLKRGDSEALAYAFFHIQHWKRIDGALQLLSIVWKDFVPKVNKDTHAFSSQLESADKELLPAWHEQSAFPQTESTLGMLIQTFACLAICILAVLSQQVPSSYGEMLRQIVTSGVQMYENSMNTFSQWAPNNIIPYLASKPVSVPEI.

The next 2 membrane-spanning stretches (helical) occupy residues 3–23 (CSWT…LFFL) and 49–69 (FYVA…IFEW). A coiled-coil region spans residues 192–219 (AEEDTETVAQAENVLRRALRAIENTLST). Residues 464 to 484 (STLGMLIQTFACLAICILAVL) form a helical membrane-spanning segment.

Belongs to the ST7 family.

The protein resides in the membrane. In Caenorhabditis briggsae, this protein is Protein ST7 homolog.